We begin with the raw amino-acid sequence, 317 residues long: RHOMBOID-like protein 2 (317 aa).

A run of 7 helical transmembrane segments spans residues 33–53, 118–138, 149–169, 172–192, 202–222, 224–244, and 272–292; these read SWLI…VMFV, WLHA…FIGI, VGLI…LFLQ, ISVG…SELL, AAAL…GMLP, VDNF…FVLL, and LFVV…VMLF. The Nucleophile role is filled by Ser-177. His-229 (charge relay system) is an active-site residue.

Belongs to the peptidase S54 family. Expressed in roots, seedlings, leaves, stems and flowers.

It localises to the golgi apparatus membrane. The catalysed reaction is Cleaves type-1 transmembrane domains using a catalytic dyad composed of serine and histidine that are contributed by different transmembrane domains.. In terms of biological role, rhomboid-type serine protease that catalyzes intramembrane proteolysis. Can cleave the Drosophila proteins Spitz and Keren. May function in pollen elongation. The protein is RHOMBOID-like protein 2 of Arabidopsis thaliana (Mouse-ear cress).